The sequence spans 182 residues: RFKKIRRLGALPGLTSKRPRSGSDPKNQLRSGKRSQYRIRLEEKQKLRFHYGLTERQLLKYVHIAGKAKGSTGQVLLQLLEMRLDNILFRLGMASTIPGARQLVNHRHILVNGRIVDIPSYRCKPRDIITTKDKQRSKALIQNYIASSPHEELPNHLTIDPFQYKGLVNQIIDSKWIGLKIN.

Residues 13–34 (GLTSKRPRSGSDPKNQLRSGKR) are disordered. The S4 RNA-binding domain occupies 82 to 143 (MRLDNILFRL…KQRSKALIQN (62 aa)).

Belongs to the universal ribosomal protein uS4 family. As to quaternary structure, part of the 30S ribosomal subunit. Contacts protein S5. The interaction surface between S4 and S5 is involved in control of translational fidelity.

It localises to the plastid. It is found in the chloroplast. Its function is as follows. One of the primary rRNA binding proteins, it binds directly to 16S rRNA where it nucleates assembly of the body of the 30S subunit. In terms of biological role, with S5 and S12 plays an important role in translational accuracy. This is Small ribosomal subunit protein uS4c (rps4) from Iris lutescens (Crimean iris).